The chain runs to 149 residues: Small ribosomal subunit protein uS13 (149 aa).

Belongs to the universal ribosomal protein uS13 family. Part of the 30S ribosomal subunit. Forms a loose heterodimer with protein S19. Forms two bridges to the 50S subunit in the 70S ribosome.

Its function is as follows. Located at the top of the head of the 30S subunit, it contacts several helices of the 16S rRNA. In the 70S ribosome it contacts the 23S rRNA (bridge B1a) and protein L5 of the 50S subunit (bridge B1b), connecting the 2 subunits; these bridges are implicated in subunit movement. This is Small ribosomal subunit protein uS13 from Methanococcus maripaludis (strain DSM 14266 / JCM 13030 / NBRC 101832 / S2 / LL).